Here is a 250-residue protein sequence, read N- to C-terminus: ATP synthase subunit a (250 aa).

5 helical membrane-spanning segments follow: residues 27–47, 86–106, 129–149, 191–211, and 219–239; these read TDTV…AFYL, FVLP…WLAV, INYV…AGIW, IFAG…IMWA, and FDLF…ILYF.

It belongs to the ATPase A chain family. In terms of assembly, F-type ATPases have 2 components, CF(1) - the catalytic core - and CF(0) - the membrane proton channel. CF(1) has five subunits: alpha(3), beta(3), gamma(1), delta(1), epsilon(1). CF(0) has three main subunits: a(1), b(2) and c(9-12). The alpha and beta chains form an alternating ring which encloses part of the gamma chain. CF(1) is attached to CF(0) by a central stalk formed by the gamma and epsilon chains, while a peripheral stalk is formed by the delta and b chains.

The protein resides in the cell membrane. Functionally, key component of the proton channel; it plays a direct role in the translocation of protons across the membrane. In Mycobacterium bovis (strain ATCC BAA-935 / AF2122/97), this protein is ATP synthase subunit a.